A 543-amino-acid polypeptide reads, in one-letter code: Bifunctional purine biosynthesis protein PurH (543 aa).

The MGS-like domain occupies 5 to 151; that stretch reads NHARPIRRAL…KNHKDVTIVV (147 aa).

Belongs to the PurH family.

The enzyme catalyses (6R)-10-formyltetrahydrofolate + 5-amino-1-(5-phospho-beta-D-ribosyl)imidazole-4-carboxamide = 5-formamido-1-(5-phospho-D-ribosyl)imidazole-4-carboxamide + (6S)-5,6,7,8-tetrahydrofolate. It carries out the reaction IMP + H2O = 5-formamido-1-(5-phospho-D-ribosyl)imidazole-4-carboxamide. It functions in the pathway purine metabolism; IMP biosynthesis via de novo pathway; 5-formamido-1-(5-phospho-D-ribosyl)imidazole-4-carboxamide from 5-amino-1-(5-phospho-D-ribosyl)imidazole-4-carboxamide (10-formyl THF route): step 1/1. Its pathway is purine metabolism; IMP biosynthesis via de novo pathway; IMP from 5-formamido-1-(5-phospho-D-ribosyl)imidazole-4-carboxamide: step 1/1. In Shewanella oneidensis (strain ATCC 700550 / JCM 31522 / CIP 106686 / LMG 19005 / NCIMB 14063 / MR-1), this protein is Bifunctional purine biosynthesis protein PurH.